The primary structure comprises 197 residues: Small ribosomal subunit protein uS4c (197 aa).

The 60-residue stretch at M84–L143 folds into the S4 RNA-binding domain.

Belongs to the universal ribosomal protein uS4 family. Part of the 30S ribosomal subunit. Contacts protein S5. The interaction surface between S4 and S5 is involved in control of translational fidelity.

It localises to the plastid. Its subcellular location is the chloroplast. Functionally, one of the primary rRNA binding proteins, it binds directly to 16S rRNA where it nucleates assembly of the body of the 30S subunit. With S5 and S12 plays an important role in translational accuracy. This Adiantum capillus-veneris (Maidenhair fern) protein is Small ribosomal subunit protein uS4c (rps4).